A 57-amino-acid chain; its full sequence is MSRLFVFILIALFLSAIIDVMSNFKVEGACSKPCRKYCIDKGARNGKCINGRCHCYY.

The first 22 residues, 1 to 22 (MSRLFVFILIALFLSAIIDVMS), serve as a signal peptide directing secretion. 3 cysteine pairs are disulfide-bonded: Cys-30-Cys-48, Cys-34-Cys-53, and Cys-38-Cys-55.

It belongs to the short scorpion toxin superfamily. Potassium channel inhibitor family. Alpha-KTx 26 subfamily. Expressed by the venom gland.

The protein resides in the secreted. In terms of biological role, recombinant toxin that reversibly inhibits the potassium current of mKv1.3/KCNA3 channel stably expressed in COS7 cells (IC(50)=150 nM). Also shows a weak inhibition on Kv1.2/KCNA2, Kv1.3/KCNA3 and TRPV1 channels. The sequence is that of Potassium channel toxin alpha-KTx 26.1 from Olivierus martensii (Manchurian scorpion).